The following is a 2148-amino-acid chain: Polyketide synthase 1 (2148 aa).

The tract at residues 19–261 (FIFGDQSSCN…TPLAVHAPYH (243 aa)) is N-terminal acylcarrier protein transacylase domain (SAT). Positions 394-829 (ESKIAIIGMS…GGNTALLVED (436 aa)) constitute a Ketosynthase family 3 (KS3) domain. Catalysis depends on for beta-ketoacyl synthase activity residues Cys-566, His-701, and His-745. The malonyl-CoA:ACP transacylase (MAT) domain stretch occupies residues 929–1233 (AFVFSGQGSQ…PSLMRNKDGW (305 aa)). Ser-1018 (for acyl/malonyl transferase activity) is an active-site residue. A product template (PT) domain region spans residues 1310–1624 (TASVHRIVHE…RKVLNTAMPP (315 aa)). The segment at 1314–1447 (HRIVHESVDK…SSLHFEQPKV (134 aa)) is N-terminal hotdog fold. Residues 1314–1619 (HRIVHESVDK…FQGIPRKVLN (306 aa)) enclose the PKS/mFAS DH domain. His-1346 acts as the Proton acceptor; for dehydratase activity in catalysis. Residues 1474–1619 (LNSRMSSGVI…FQGIPRKVLN (146 aa)) are C-terminal hotdog fold. Asp-1533 (proton donor; for dehydratase activity) is an active-site residue. The tract at residues 1619–1657 (NTAMPPPKSQNEAPVRSAPAKPAAKPPKSASSEHSGHFA) is disordered. Low complexity predominate over residues 1635–1650 (SAPAKPAAKPPKSASS). The 75-residue stretch at 1678–1752 (RNPMLAVFKI…DLATHLGLDT (75 aa)) folds into the Carrier 1 domain. Position 1712 is an O-(pantetheine 4'-phosphoryl)serine (Ser-1712). Over residues 1755 to 1790 (SDQSSGQSSSSGGLSPRSDSIGEITSSATTPPSLSP) the composition is skewed to low complexity. The interval 1755–1796 (SDQSSGQSSSSGGLSPRSDSIGEITSSATTPPSLSPRGSVSG) is disordered. A Carrier 2 domain is found at 1793-1870 (SVSGSQCKDV…SFKHMFQQGH (78 aa)). O-(pantetheine 4'-phosphoryl)serine is present on Ser-1830. The segment at 1882-2146 (LKQYRATSTL…ERVAAFIRST (265 aa)) is thioesterase (TE) domain. Catalysis depends on Ser-1973, which acts as the For thioesterase activity.

Functionally, polyketide synthase; part of the Pks1 gene cluster that mediates the biosynthesis of an anthraquinone derivative pigment that contributes to conidial pigmentation that provides protection from UV radiation, heat and cold stress. The polyketide synthase Pks1 produces 1-acetyl-2,4,6,8-tetrahydroxy-9,10-anthraquinone though condensation of acetyl-CoA with malonyl-CoA. The dehydratase EthD and the laccase Mlac1 further convert the anthraquinone derivative into the final conidial pigment. The chain is Polyketide synthase 1 from Metarhizium guizhouense (strain ARSEF 977).